The primary structure comprises 135 residues: Protein NrdI (135 aa).

It belongs to the NrdI family.

Functionally, probably involved in ribonucleotide reductase function. This chain is Protein NrdI, found in Pectobacterium carotovorum subsp. carotovorum (strain PC1).